Consider the following 102-residue polypeptide: Flagellar hook-basal body complex protein FliE (102 aa).

The protein belongs to the FliE family.

The protein resides in the bacterial flagellum basal body. The chain is Flagellar hook-basal body complex protein FliE from Halalkalibacterium halodurans (strain ATCC BAA-125 / DSM 18197 / FERM 7344 / JCM 9153 / C-125) (Bacillus halodurans).